We begin with the raw amino-acid sequence, 364 residues long: Cell division protein FtsZ 1 (364 aa).

Residues 47–48 (GA), 97–99 (AGG), 134–136 (GTG), Glu-165, Arg-169, and Asp-212 contribute to the GTP site.

Belongs to the FtsZ family. Homodimer. Polymerizes to form a dynamic ring structure in a strictly GTP-dependent manner. Interacts directly with several other division proteins.

It is found in the cytoplasm. Functionally, essential cell division protein that forms a contractile ring structure (Z ring) at the future cell division site. The regulation of the ring assembly controls the timing and the location of cell division. One of the functions of the FtsZ ring is to recruit other cell division proteins to the septum to produce a new cell wall between the dividing cells. Binds GTP and shows GTPase activity. In Methanocaldococcus jannaschii (strain ATCC 43067 / DSM 2661 / JAL-1 / JCM 10045 / NBRC 100440) (Methanococcus jannaschii), this protein is Cell division protein FtsZ 1.